Consider the following 539-residue polypeptide: CTP synthase (539 aa).

The tract at residues 1–267 is amidoligase domain; it reads MTKFIFVTGG…DDLVIKRLDL (267 aa). Residue Ser13 coordinates CTP. Ser13 contacts UTP. An ATP-binding site is contributed by 14-19; sequence SLGKGI. Tyr54 contributes to the L-glutamine binding site. Residue Asp71 participates in ATP binding. Positions 71 and 141 each coordinate Mg(2+). Residues 148 to 150, 188 to 193, and Lys224 each bind CTP; these read DIE and KTKPTQ. UTP-binding positions include 188–193 and Lys224; that span reads KTKPTQ. 240–242 serves as a coordination point for ATP; sequence RDA. Positions 293–535 constitute a Glutamine amidotransferase type-1 domain; it reads TIGLVGKYVS…IEAANKYKEA (243 aa). L-glutamine is bound at residue Gly355. Cys382 functions as the Nucleophile; for glutamine hydrolysis in the catalytic mechanism. L-glutamine contacts are provided by residues 383–386, Glu406, and Arg463; that span reads LGMQ. Residues His508 and Glu510 contribute to the active site.

It belongs to the CTP synthase family. As to quaternary structure, homotetramer.

It carries out the reaction UTP + L-glutamine + ATP + H2O = CTP + L-glutamate + ADP + phosphate + 2 H(+). It catalyses the reaction L-glutamine + H2O = L-glutamate + NH4(+). The catalysed reaction is UTP + NH4(+) + ATP = CTP + ADP + phosphate + 2 H(+). The protein operates within pyrimidine metabolism; CTP biosynthesis via de novo pathway; CTP from UDP: step 2/2. Allosterically activated by GTP, when glutamine is the substrate; GTP has no effect on the reaction when ammonia is the substrate. The allosteric effector GTP functions by stabilizing the protein conformation that binds the tetrahedral intermediate(s) formed during glutamine hydrolysis. Inhibited by the product CTP, via allosteric rather than competitive inhibition. Its function is as follows. Catalyzes the ATP-dependent amination of UTP to CTP with either L-glutamine or ammonia as the source of nitrogen. Regulates intracellular CTP levels through interactions with the four ribonucleotide triphosphates. The chain is CTP synthase from Staphylococcus carnosus (strain TM300).